The primary structure comprises 308 residues: D-alanine--D-alanine ligase (308 aa).

The region spanning 102–302 is the ATP-grasp domain; the sequence is KHVAKAAGIP…FGEFLRWMVE (201 aa). 128–183 provides a ligand contact to ATP; the sequence is PMKPPYVVKPVREGSSFGVVIVKEDQSHPPQVITSSEWRYGDRVMVERYIAGREFT. Mg(2+)-binding residues include aspartate 252, glutamate 269, and asparagine 271.

It belongs to the D-alanine--D-alanine ligase family. The cofactor is Mg(2+). Mn(2+) is required as a cofactor.

The protein resides in the cytoplasm. It catalyses the reaction 2 D-alanine + ATP = D-alanyl-D-alanine + ADP + phosphate + H(+). Its pathway is cell wall biogenesis; peptidoglycan biosynthesis. In terms of biological role, cell wall formation. The protein is D-alanine--D-alanine ligase of Rhizobium meliloti (strain 1021) (Ensifer meliloti).